The following is a 734-amino-acid chain: Putative protocadherin beta-18 (734 aa).

Cadherin domains follow at residues 1–79, 80–188, 189–293, 294–398, and 399–508; these read MWKT…TPTF, LNNH…APEF, EKPV…PPEI, AMTS…APIF, and TQTS…SPFV. A glycan (N-linked (GlcNAc...) asparagine) is linked at Asn-115. Asn-365 and Asn-383 each carry an N-linked (GlcNAc...) asparagine glycan. N-linked (GlcNAc...) asparagine glycosylation occurs at Asn-514. Positions 515-621 constitute a Cadherin 6 domain; that stretch reads GSAPCTELVP…GFSQPYLPLT (107 aa). The chain crosses the membrane as a helical span at residues 638–658; sequence VVALASVSSLFLFSVFLFVAV.

It is found in the cell membrane. Functionally, potential calcium-dependent cell-adhesion protein. The protein is Putative protocadherin beta-18 (PCDHB18P) of Homo sapiens (Human).